A 273-amino-acid chain; its full sequence is Photosystem I chlorophyll a/b-binding protein 3-1, chloroplastic (273 aa).

The transit peptide at 1–39 directs the protein to the chloroplast; that stretch reads MAAQALVSSSLTSSVQTARQIFGSKPVASASQKKSSFVV. Trp56 provides a ligand contact to chlorophyll b. Chlorophyll a is bound by residues Phe76, Ser82, and Glu100. Residue Arg105 coordinates chlorophyll b. A helical membrane pass occupies residues 106–126; that stretch reads FAMLGAAGAIAPEILGKAGLI. Residue Ile140 coordinates chlorophyll b. A helical transmembrane segment spans residues 146 to 166; that stretch reads YTYWADNYTLFVLEMALMGFA. Chlorophyll b-binding residues include Glu167 and Arg170. Ser195 carries the phosphoserine modification. Chlorophyll a-binding residues include Lys224, Glu225, Asn228, Arg230, Gln242, and His257. The helical transmembrane segment at 231–251 threads the bilayer; the sequence is LAMLAILGYFIQGLVTGVGPY. Phe272 provides a ligand contact to chlorophyll b.

It belongs to the light-harvesting chlorophyll a/b-binding (LHC) protein family. In terms of assembly, the LHC complex consists of chlorophyll a-b binding proteins. Red-emitting heterodimer with LHCA2. Interacts with LHCA5. Binds to carotenoids. Requires Binds at least 14 chlorophylls (8 Chl-a and 6 Chl-b) and carotenoids such as lutein and neoxanthin. as cofactor. Post-translationally, photoregulated by reversible phosphorylation of its threonine residues.

The protein resides in the plastid. It localises to the chloroplast thylakoid membrane. The light-harvesting complex (LHC) functions as a light receptor, it captures and delivers excitation energy to photosystems with which it is closely associated, here photosystem I. The chain is Photosystem I chlorophyll a/b-binding protein 3-1, chloroplastic from Arabidopsis thaliana (Mouse-ear cress).